We begin with the raw amino-acid sequence, 184 residues long: Exosome complex protein LRP1 (184 aa).

The interval 157-184 is disordered; sequence DSTDHIRKASSKKSKRLDKVGKKKGGKK. The span at 164–184 shows a compositional bias: basic residues; that stretch reads KASSKKSKRLDKVGKKKGGKK.

This sequence belongs to the C1D family. As to quaternary structure, associates with nuclear form of the RNA exosome complex. Interacts with RRP4, RRP6, RRP45 and RRP46.

The protein resides in the nucleus. Its function is as follows. Required for exosome-dependent processing of pre-rRNA and small nucleolar RNA (snRNA) precursors. Involved in processing of 35S pre-rRNA at the A0, A1 and A2 sites. Required for activity of RRP6 in 7S pre-rRNA processing. Also has a role in 3'-processing of U4 and U5 small nuclear RNAs (snRNAs). Acts as a mRNA export factor. Mediates mRNA degradation upon UV irradiation. Maintains genome integrity where it is involved in both non-homologous end joining (NHEJ) and homologous recombination pathway repair of double strand DNA breaks. During NHEJ, required for joining 3'-overhanging ends. Also involved in telomere length regulation and maintenance. The sequence is that of Exosome complex protein LRP1 (LRP1) from Saccharomyces cerevisiae (strain ATCC 204508 / S288c) (Baker's yeast).